Reading from the N-terminus, the 143-residue chain is Probable glycine cleavage system H protein (143 aa).

Residues 36-118 (VATVGITDFA…YGEGWIFKIK (83 aa)) enclose the Lipoyl-binding domain. Residue Lys-77 is modified to N6-lipoyllysine.

It belongs to the GcvH family. As to quaternary structure, the glycine cleavage system is composed of four proteins: P, T, L and H. Requires (R)-lipoate as cofactor.

Functionally, the glycine cleavage system catalyzes the degradation of glycine. The H protein shuttles the methylamine group of glycine from the P protein to the T protein. In Aeropyrum pernix (strain ATCC 700893 / DSM 11879 / JCM 9820 / NBRC 100138 / K1), this protein is Probable glycine cleavage system H protein.